Consider the following 370-residue polypeptide: Protein-glutamate methylesterase/protein-glutamine glutaminase 3 (370 aa).

Residues 3–119 (KVLIVDDSAL…SLNVSRIERE (117 aa)) form the Response regulatory domain. D53 is modified (4-aspartylphosphate). Residues 166 to 360 (SLTEIGVVLI…GQLNAWMSRT (195 aa)) form the CheB-type methylesterase domain. Active-site residues include S178, H205, and D302.

Belongs to the CheB family. Post-translationally, phosphorylated by CheA. Phosphorylation of the N-terminal regulatory domain activates the methylesterase activity.

It localises to the cytoplasm. It catalyses the reaction [protein]-L-glutamate 5-O-methyl ester + H2O = L-glutamyl-[protein] + methanol + H(+). It carries out the reaction L-glutaminyl-[protein] + H2O = L-glutamyl-[protein] + NH4(+). Its function is as follows. Involved in chemotaxis. Part of a chemotaxis signal transduction system that modulates chemotaxis in response to various stimuli. Catalyzes the demethylation of specific methylglutamate residues introduced into the chemoreceptors (methyl-accepting chemotaxis proteins or MCP) by CheR. Also mediates the irreversible deamidation of specific glutamine residues to glutamic acid. In Rhodospirillum rubrum (strain ATCC 11170 / ATH 1.1.1 / DSM 467 / LMG 4362 / NCIMB 8255 / S1), this protein is Protein-glutamate methylesterase/protein-glutamine glutaminase 3.